The chain runs to 286 residues: Fructose-bisphosphate aldolase (286 aa).

Ser-50 lines the D-glyceraldehyde 3-phosphate pocket. Asp-85 functions as the Proton donor in the catalytic mechanism. Residues His-86, Asp-107, Glu-137, and His-181 each contribute to the Zn(2+) site. Residue Gly-182 coordinates dihydroxyacetone phosphate. Zn(2+) is bound at residue His-209. Residues 210-212 and 231-234 contribute to the dihydroxyacetone phosphate site; these read GGT and NVNT.

It belongs to the class II fructose-bisphosphate aldolase family. Zn(2+) serves as cofactor.

The enzyme catalyses beta-D-fructose 1,6-bisphosphate = D-glyceraldehyde 3-phosphate + dihydroxyacetone phosphate. It functions in the pathway carbohydrate degradation; glycolysis; D-glyceraldehyde 3-phosphate and glycerone phosphate from D-glucose: step 4/4. Functionally, catalyzes the aldol condensation of dihydroxyacetone phosphate (DHAP or glycerone-phosphate) with glyceraldehyde 3-phosphate (G3P) to form fructose 1,6-bisphosphate (FBP) in gluconeogenesis and the reverse reaction in glycolysis. In Staphylococcus aureus (strain MSSA476), this protein is Fructose-bisphosphate aldolase (fba).